Reading from the N-terminus, the 285-residue chain is Proteasome subunit beta (285 aa).

Positions 1 to 50 (MTAEHPARLPQAFMTPGSSSFVDFLAAHDPSLLPSSRALPAGSAPPAPHG) are cleaved as a propeptide — removed in mature form; by autocatalysis. Threonine 51 acts as the Nucleophile in catalysis. The disordered stretch occupies residues 266-285 (RTRQARSSRSRHGSLGGDLR).

This sequence belongs to the peptidase T1B family. In terms of assembly, the 20S proteasome core is composed of 14 alpha and 14 beta subunits that assemble into four stacked heptameric rings, resulting in a barrel-shaped structure. The two inner rings, each composed of seven catalytic beta subunits, are sandwiched by two outer rings, each composed of seven alpha subunits. The catalytic chamber with the active sites is on the inside of the barrel. Has a gated structure, the ends of the cylinder being occluded by the N-termini of the alpha-subunits. Is capped by the proteasome-associated ATPase, ARC.

The protein localises to the cytoplasm. The catalysed reaction is Cleavage of peptide bonds with very broad specificity.. The protein operates within protein degradation; proteasomal Pup-dependent pathway. Its activity is regulated as follows. The formation of the proteasomal ATPase ARC-20S proteasome complex, likely via the docking of the C-termini of ARC into the intersubunit pockets in the alpha-rings, may trigger opening of the gate for substrate entry. Interconversion between the open-gate and close-gate conformations leads to a dynamic regulation of the 20S proteasome proteolysis activity. Its function is as follows. Component of the proteasome core, a large protease complex with broad specificity involved in protein degradation. In Sanguibacter keddieii (strain ATCC 51767 / DSM 10542 / NCFB 3025 / ST-74), this protein is Proteasome subunit beta.